A 189-amino-acid chain; its full sequence is Alanine and glycine-rich protein (189 aa).

Residues A127–G160 show a composition bias toward gly residues. Residues A127–R170 form a disordered region.

In terms of tissue distribution, component of the organic matrix of calcified shell layers like nacre and prisms.

It is found in the secreted. This Mytilus californianus (California mussel) protein is Alanine and glycine-rich protein.